The following is a 500-amino-acid chain: Zinc finger protein 689 (500 aa).

The tract at residues Met-1–Arg-24 is disordered. The KRAB domain maps to Leu-29–Arg-100. The interval Thr-110–Gln-144 is disordered. Positions Gln-112 to Arg-127 are enriched in basic and acidic residues. The segment covering Lys-128–Lys-137 has biased composition (basic residues). The segment at Pro-149–Gln-171 adopts a C2H2-type 1; degenerate zinc-finger fold. 10 consecutive C2H2-type zinc fingers follow at residues Tyr-177–His-199, Tyr-205–His-227, Tyr-233–His-255, His-261–His-283, Tyr-289–His-311, Tyr-317–His-339, Tyr-345–His-367, Tyr-373–His-395, His-401–His-423, and Tyr-429–His-451. Lys-455 is covalently cross-linked (Glycyl lysine isopeptide (Lys-Gly) (interchain with G-Cter in SUMO2)). The C2H2-type 12 zinc-finger motif lies at Phe-457 to His-482.

The protein belongs to the krueppel C2H2-type zinc-finger protein family.

The protein resides in the nucleus. May be involved in transcriptional regulation. This is Zinc finger protein 689 (Znf689) from Rattus norvegicus (Rat).